Consider the following 85-residue polypeptide: U4-theraphotoxin-Hhn1a (85 aa).

The first 22 residues, 1–22 (MKVTLIAILTCAAALVLHTTAA), serve as a signal peptide directing secretion. The propeptide occupies 23 to 48 (EELEAESQLMEVGMPDTELAAVDEER). Disulfide bonds link Cys52/Cys66, Cys56/Cys77, and Cys71/Cys82.

This sequence belongs to the neurotoxin 12 (Hwtx-2) family. 02 (Hwtx-2) subfamily. Monomer. As to expression, expressed by the venom gland.

The protein localises to the secreted. In terms of biological role, neurotoxin active on both insects and mammals. The protein is U4-theraphotoxin-Hhn1a of Cyriopagopus hainanus (Chinese bird spider).